We begin with the raw amino-acid sequence, 197 residues long: MSASRFIKCVTVGDGAVGKTCLLISYTSNTFPTDYVPTVFDNFSANVVVNGATVNLGLWDTAGQEDYNRLRPLSYRGADVFILAFSLISKASYENVSKKWIPELKHYAPGVPIVLVGTKLDLRDDKQFFIDHPGAVPITTVQGEELKKLIGAPAYIECSSKSQENVKGVFDAAIRVVLQPPKQKKKKNKAQKACSIL.

13 to 20 (GDGAVGKT) is a binding site for GTP. The Effector region signature appears at 35–43 (YVPTVFDNF). GTP contacts are provided by residues 60-64 (DTAGQ) and 118-121 (TKLD). Ser160 contributes to the GDP binding site. Cys194 bears the Cysteine methyl ester mark. Cys194 carries the S-geranylgeranyl cysteine lipid modification. Residues 195 to 197 (SIL) constitute a propeptide, removed in mature form.

This sequence belongs to the small GTPase superfamily. Rho family. As to quaternary structure, interacts with SPK1. Ubiquitous. Preferentially expressed in mature pollen and pollen tubes.

The protein resides in the cytoplasm. Its subcellular location is the membrane. May be involved in cell polarity control during the actin-dependent tip growth of pollen tubes. In terms of biological role, inactive GDP-bound Rho GTPases reside in the cytosol, are found in a complex with Rho GDP-dissociation inhibitors (Rho GDIs), and are released from the GDI protein in order to translocate to membranes upon activation. This Arabidopsis thaliana (Mouse-ear cress) protein is Rac-like GTP-binding protein ARAC6 (ARAC6).